Here is a 304-residue protein sequence, read N- to C-terminus: tRNA U34 carboxymethyltransferase (304 aa).

Residues Lys73, Trp87, Lys92, Gly111, 133 to 135 (DPS), 160 to 161 (VE), Tyr180, and Arg295 contribute to the carboxy-S-adenosyl-L-methionine site.

The protein belongs to the class I-like SAM-binding methyltransferase superfamily. CmoB family. As to quaternary structure, homotetramer.

It catalyses the reaction carboxy-S-adenosyl-L-methionine + 5-hydroxyuridine(34) in tRNA = 5-carboxymethoxyuridine(34) in tRNA + S-adenosyl-L-homocysteine + H(+). Its function is as follows. Catalyzes carboxymethyl transfer from carboxy-S-adenosyl-L-methionine (Cx-SAM) to 5-hydroxyuridine (ho5U) to form 5-carboxymethoxyuridine (cmo5U) at position 34 in tRNAs. This is tRNA U34 carboxymethyltransferase from Aliarcobacter butzleri (strain RM4018) (Arcobacter butzleri).